Reading from the N-terminus, the 577-residue chain is Zinc finger-containing ubiquitin peptidase 1 (577 aa).

The C2H2-type 1 zinc finger occupies 2-24; sequence LSCDICGETVTSEPDRKAHLIVH. Residues 29–52 form a C2H2-type 2; atypical zinc finger; the sequence is IICPFCKLSGINYNEMCFHIETAH. C2H2-type zinc fingers lie at residues 153-176 and 192-214; these read PECPFCGRIERYSQDMEIHVKTKH and YDCPMCGLVCTNYHILQEHVDLH. Residues 225-247 form an MIU region; the sequence is DRVQCSSDRELAHQLQQEEERKR. Residues 231 to 261 show a composition bias toward basic and acidic residues; sequence SDRELAHQLQQEEERKRKSEESRQEREEFQK. Residues 231-262 form a disordered region; that stretch reads SDRELAHQLQQEEERKRKSEESRQEREEFQKL. A zUBD/ZHA region spans residues 248–273; it reads KSEESRQEREEFQKLQRQYGLDNSGG. Lys261 carries the N6-acetyllysine modification. Cys359 serves as the catalytic Nucleophile. His490 acts as the Proton acceptor in catalysis. Residue Asp511 is part of the active site.

This sequence belongs to the peptidase C78 family. ZUFSP subfamily. Interacts with RPA1 and RPA2.

Its subcellular location is the cytoplasm. The protein localises to the nucleus. The catalysed reaction is Thiol-dependent hydrolysis of ester, thioester, amide, peptide and isopeptide bonds formed by the C-terminal Gly of ubiquitin (a 76-residue protein attached to proteins as an intracellular targeting signal).. Deubiquitinase with endodeubiquitinase activity that specifically interacts with and cleaves 'Lys-63'-linked long polyubiquitin chains. Shows only weak activity against 'Lys-11' and 'Lys-48'-linked chains. Plays an important role in genome stability pathways, functioning to prevent spontaneous DNA damage and also promote cellular survival in response to exogenous DNA damage. Modulates the ubiquitination status of replication protein A (RPA) complex proteins in response to replication stress. The sequence is that of Zinc finger-containing ubiquitin peptidase 1 from Rattus norvegicus (Rat).